Consider the following 88-residue polypeptide: L-amino-acid oxidase (88 aa).

Residues Glu74 and 81–86 (GWIDST) each bind FAD. 81-82 (GW) is a substrate binding site.

It belongs to the flavin monoamine oxidase family. FIG1 subfamily. As to quaternary structure, homodimer; non-covalently linked. Requires FAD as cofactor. Post-translationally, N-glycosylated. Expressed by the venom gland.

The protein localises to the secreted. It catalyses the reaction an L-alpha-amino acid + O2 + H2O = a 2-oxocarboxylate + H2O2 + NH4(+). The catalysed reaction is L-leucine + O2 + H2O = 4-methyl-2-oxopentanoate + H2O2 + NH4(+). It carries out the reaction L-phenylalanine + O2 + H2O = 3-phenylpyruvate + H2O2 + NH4(+). The enzyme catalyses L-tryptophan + O2 + H2O = indole-3-pyruvate + H2O2 + NH4(+). It catalyses the reaction L-methionine + O2 + H2O = 4-methylsulfanyl-2-oxobutanoate + H2O2 + NH4(+). The catalysed reaction is L-isoleucine + O2 + H2O = (S)-3-methyl-2-oxopentanoate + H2O2 + NH4(+). It carries out the reaction L-arginine + O2 + H2O = 5-guanidino-2-oxopentanoate + H2O2 + NH4(+). The enzyme catalyses L-histidine + O2 + H2O = 3-(imidazol-5-yl)pyruvate + H2O2 + NH4(+). It catalyses the reaction L-asparagine + O2 + H2O = 2-oxosuccinamate + H2O2 + NH4(+). The catalysed reaction is L-valine + O2 + H2O = 3-methyl-2-oxobutanoate + H2O2 + NH4(+). It carries out the reaction L-glutamate + O2 + H2O = H2O2 + 2-oxoglutarate + NH4(+). Functionally, catalyzes an oxidative deamination of predominantly hydrophobic and aromatic L-amino acids, thus producing hydrogen peroxide that may contribute to the diverse toxic effects of this enzyme. Is highly active on L-Met, L-Leu, L-Phe, L-Ile, and L-Arg, moderately active on L-His, L-Trp, L-Asn, L-Glu, and L-Val, and weakly or not active on L-Gln, L-Lys, L-Asp, L-Ala, L-Tyr, L-Ser, L-Pro, L-Gly, L-Thr, and L-Cys. Exhibits diverse biological activities, such as hemorrhage, hemolysis, edema, apoptosis of vascular endothelial cells or tumor cell lines, antibacterial and antiparasitic activities. In addition, this protein has an ability to induce apoptosis in cultured HeLa and K562 cells, and inhibits ADP-induced platelet aggregation dose-dependently. Effects of snake L-amino oxidases on platelets are controversial, since they either induce aggregation or inhibit agonist-induced aggregation. These different effects are probably due to different experimental conditions. This chain is L-amino-acid oxidase, found in Vipera berus berus (Common viper).